The primary structure comprises 665 residues: mRNA cleavage and polyadenylation factor CLP1 (665 aa).

Residues Lys-91 and 195-200 each bind ATP; that span reads SAGKTS. Disordered stretches follow at residues 218-283 and 593-615; these read VKEG…SQAK and PPPRNQSKDETSSPDDPGHHDYE. Composition is skewed to basic and acidic residues over residues 219–238 and 598–614; these read KEGDDASRRAKHRSEPEIHP and QSKDETSSPDDPGHHDY.

It belongs to the Clp1 family. Clp1 subfamily. Component of a pre-mRNA cleavage factor complex. Interacts directly with PCF11.

It localises to the nucleus. Its function is as follows. Required for endonucleolytic cleavage during polyadenylation-dependent pre-mRNA 3'-end formation. The polypeptide is mRNA cleavage and polyadenylation factor CLP1 (Malassezia globosa (strain ATCC MYA-4612 / CBS 7966) (Dandruff-associated fungus)).